The primary structure comprises 309 residues: MITFLPIIFSILVVVTFVIGNFANGFIALVNSTEWVKRQKISFADQILTALAVSRVGLLWVLLLNWYATVLNPAFYSVEVRTTTYNVWAVTNHFSNWLATSLSIFYLLKIANFSNLIFLHLKRRVKNVILVMLLGPLLILACHLFMVNMNEIVRTKEYEENMTWKYILRNAIYHPGMTVTTLQNLVPFTLTLISFLLLICSLCKHLKKMQLHGKGPQDPSTKVHIKALQIVISFLLLCVIYFVSVIISIWSFESLGNKPVFMFCQAIRFSYPSAHPFIVIWGNKKLKQTFLSVLWNVRYWVKGQKPSSL.

The Extracellular portion of the chain corresponds to 1-2; sequence MI. Residues 3–23 traverse the membrane as a helical segment; sequence TFLPIIFSILVVVTFVIGNFA. Over 24–55 the chain is Cytoplasmic; it reads NGFIALVNSTEWVKRQKISFADQILTALAVSR. The chain crosses the membrane as a helical span at residues 56 to 76; that stretch reads VGLLWVLLLNWYATVLNPAFY. The Extracellular segment spans residues 77-100; the sequence is SVEVRTTTYNVWAVTNHFSNWLAT. Residues 101 to 121 form a helical membrane-spanning segment; the sequence is SLSIFYLLKIANFSNLIFLHL. Residues 122–126 are Cytoplasmic-facing; that stretch reads KRRVK. A helical membrane pass occupies residues 127 to 147; the sequence is NVILVMLLGPLLILACHLFMV. Residues 148-181 are Extracellular-facing; sequence NMNEIVRTKEYEENMTWKYILRNAIYHPGMTVTT. An N-linked (GlcNAc...) asparagine glycan is attached at Asn161. A helical membrane pass occupies residues 182–202; it reads LQNLVPFTLTLISFLLLICSL. Residues 203-229 are Cytoplasmic-facing; the sequence is CKHLKKMQLHGKGPQDPSTKVHIKALQ. The chain crosses the membrane as a helical span at residues 230-250; the sequence is IVISFLLLCVIYFVSVIISIW. Over 251-259 the chain is Extracellular; sequence SFESLGNKP. The helical transmembrane segment at 260 to 280 threads the bilayer; it reads VFMFCQAIRFSYPSAHPFIVI. Residues 281-309 lie on the Cytoplasmic side of the membrane; it reads WGNKKLKQTFLSVLWNVRYWVKGQKPSSL.

It belongs to the G-protein coupled receptor T2R family.

The protein localises to the membrane. In terms of biological role, receptor that may play a role in the perception of bitterness and is gustducin-linked. May play a role in sensing the chemical composition of the gastrointestinal content. The activity of this receptor may stimulate alpha gustducin, mediate PLC-beta-2 activation and lead to the gating of TRPM5. This chain is Taste receptor type 2 member 31 (TAS2R31), found in Papio hamadryas (Hamadryas baboon).